The primary structure comprises 146 residues: Hemoglobin subunit beta (146 aa).

One can recognise a Globin domain in the interval 2–146 (HWSAEEKQLI…VAHALARKYH (145 aa)). His63 and His92 together coordinate heme b.

It belongs to the globin family. In terms of assembly, heterotetramer of two alpha chains and two beta chains. In terms of tissue distribution, red blood cells.

In terms of biological role, involved in oxygen transport from the lung to the various peripheral tissues. The protein is Hemoglobin subunit beta (HBB) of Stercorarius maccormicki (South polar skua).